The chain runs to 44 residues: uncharacterized protein (44 aa).

This is an uncharacterized protein from Treponema pallidum (strain Nichols).